Consider the following 341-residue polypeptide: DNA-directed RNA polymerase subunit alpha (341 aa).

The alpha N-terminal domain (alpha-NTD) stretch occupies residues 1-233 (MVREEVAGST…DLFLPFLHAE (233 aa)). Positions 269–341 (IPLNCIFIDQ…IDLLKNKLSF (73 aa)) are alpha C-terminal domain (alpha-CTD).

The protein belongs to the RNA polymerase alpha chain family. In terms of assembly, in plastids the minimal PEP RNA polymerase catalytic core is composed of four subunits: alpha, beta, beta', and beta''. When a (nuclear-encoded) sigma factor is associated with the core the holoenzyme is formed, which can initiate transcription.

Its subcellular location is the plastid. It is found in the chloroplast. It catalyses the reaction RNA(n) + a ribonucleoside 5'-triphosphate = RNA(n+1) + diphosphate. Functionally, DNA-dependent RNA polymerase catalyzes the transcription of DNA into RNA using the four ribonucleoside triphosphates as substrates. In Lolium perenne (Perennial ryegrass), this protein is DNA-directed RNA polymerase subunit alpha.